Reading from the N-terminus, the 620-residue chain is 1-deoxy-D-xylulose-5-phosphate synthase (620 aa).

Thiamine diphosphate-binding positions include H80 and 121 to 123 (GHS). Mg(2+) is bound at residue D152. Thiamine diphosphate contacts are provided by residues 153–154 (GA), N181, Y288, and E370. N181 contacts Mg(2+).

Belongs to the transketolase family. DXPS subfamily. In terms of assembly, homodimer. Mg(2+) is required as a cofactor. Thiamine diphosphate serves as cofactor.

The catalysed reaction is D-glyceraldehyde 3-phosphate + pyruvate + H(+) = 1-deoxy-D-xylulose 5-phosphate + CO2. It functions in the pathway metabolic intermediate biosynthesis; 1-deoxy-D-xylulose 5-phosphate biosynthesis; 1-deoxy-D-xylulose 5-phosphate from D-glyceraldehyde 3-phosphate and pyruvate: step 1/1. In terms of biological role, catalyzes the acyloin condensation reaction between C atoms 2 and 3 of pyruvate and glyceraldehyde 3-phosphate to yield 1-deoxy-D-xylulose-5-phosphate (DXP). In Salmonella agona (strain SL483), this protein is 1-deoxy-D-xylulose-5-phosphate synthase.